Consider the following 191-residue polypeptide: Putative 3-methyladenine DNA glycosylase (191 aa).

The protein belongs to the DNA glycosylase MPG family.

This is Putative 3-methyladenine DNA glycosylase from Carboxydothermus hydrogenoformans (strain ATCC BAA-161 / DSM 6008 / Z-2901).